The primary structure comprises 230 residues: GTP cyclohydrolase III (230 aa).

Belongs to the archaeal-type GTP cyclohydrolase family.

It carries out the reaction GTP + 3 H2O = 2-amino-5-formylamino-6-(5-phospho-D-ribosylamino)pyrimidin-4(3H)-one + 2 phosphate + 2 H(+). Its function is as follows. Catalyzes the formation of 2-amino-5-formylamino-6-ribofuranosylamino-4(3H)-pyrimidinone ribonucleotide monophosphate and inorganic phosphate from GTP. Also has an independent pyrophosphate phosphohydrolase activity. The chain is GTP cyclohydrolase III from Saccharolobus islandicus (strain M.16.27) (Sulfolobus islandicus).